Reading from the N-terminus, the 341-residue chain is Anthranilate phosphoribosyltransferase (341 aa).

5-phospho-alpha-D-ribose 1-diphosphate contacts are provided by residues Gly80, Gly83–Asp84, Thr88, Asn90–Thr93, Lys108–Ser116, and Ser120. Position 80 (Gly80) interacts with anthranilate. Ser92 lines the Mg(2+) pocket. Residue Asn111 coordinates anthranilate. An anthranilate-binding site is contributed by Arg166. Mg(2+)-binding residues include Asp225 and Glu226.

The protein belongs to the anthranilate phosphoribosyltransferase family. In terms of assembly, homodimer. Requires Mg(2+) as cofactor.

The enzyme catalyses N-(5-phospho-beta-D-ribosyl)anthranilate + diphosphate = 5-phospho-alpha-D-ribose 1-diphosphate + anthranilate. It participates in amino-acid biosynthesis; L-tryptophan biosynthesis; L-tryptophan from chorismate: step 2/5. Functionally, catalyzes the transfer of the phosphoribosyl group of 5-phosphorylribose-1-pyrophosphate (PRPP) to anthranilate to yield N-(5'-phosphoribosyl)-anthranilate (PRA). This chain is Anthranilate phosphoribosyltransferase, found in Priestia megaterium (strain ATCC 12872 / QMB1551) (Bacillus megaterium).